The primary structure comprises 143 residues: Small ribosomal subunit protein uS11c (143 aa).

This sequence belongs to the universal ribosomal protein uS11 family. As to quaternary structure, part of the 30S ribosomal subunit.

The protein localises to the plastid. It is found in the chloroplast. The sequence is that of Small ribosomal subunit protein uS11c from Oryza nivara (Indian wild rice).